Here is a 421-residue protein sequence, read N- to C-terminus: Cytochrome c biogenesis protein Ccs1 (421 aa).

The next 3 membrane-spanning stretches (helical) occupy residues 12–32 (LRFA…GTVI), 71–91 (TWWF…CTIL), and 157–177 (IAPI…IFGA).

The protein belongs to the Ccs1/CcsB family. May interact with CcsA.

Its subcellular location is the plastid. The protein resides in the chloroplast thylakoid membrane. Its function is as follows. Required during biogenesis of c-type cytochromes (cytochrome c6 and cytochrome f) at the step of heme attachment. The protein is Cytochrome c biogenesis protein Ccs1 of Trieres chinensis (Marine centric diatom).